The chain runs to 355 residues: UPF0421 protein BCE_2776 (355 aa).

The next 4 membrane-spanning stretches (helical) occupy residues 19 to 39 (IAVFLTVLVCEFFNIPTIFAV), 74 to 94 (FTFFLGHQALSYALAAMFTIV), 109 to 129 (TLTAVAMIPITADHYFTAFLI), and 131 to 151 (LATTSTGIIVSTLVNFFILPP).

The protein belongs to the UPF0421 family.

The protein resides in the cell membrane. The chain is UPF0421 protein BCE_2776 from Bacillus cereus (strain ATCC 10987 / NRS 248).